A 359-amino-acid chain; its full sequence is GalNAc-alpha-(1-&gt;4)-GalNAc-alpha-(1-&gt;3)-diNAcBac-PP-undecaprenol alpha-1,4-N-acetyl-D-galactosaminyltransferase (359 aa).

Glu-17 is a binding site for substrate. UDP-N-acetyl-alpha-D-galactosamine is bound at residue Tyr-45. 71 to 74 is a binding site for substrate; it reads RFKK. UDP-N-acetyl-alpha-D-galactosamine-binding positions include His-117, Arg-190, Lys-195, Val-246, and 266–274; that span reads EGLPTVLIE. Arg-190 lines the substrate pocket.

It belongs to the glycosyltransferase group 1 family.

Its subcellular location is the cell inner membrane. The catalysed reaction is N-acetyl-alpha-D-galactosaminyl-(1-&gt;4)-N-acetyl-alpha-D-galactosaminyl-(1-&gt;3)-N,N'-diacetyl-alpha-D-bacillosaminyl-tri-trans,heptacis-undecaprenyl diphosphate + 3 UDP-N-acetyl-alpha-D-galactosamine = [alpha-D-GalNAc-(1-&gt;4)]4-alpha-D-GalNAc-(1-&gt;3)-alpha-D-diNAcBac-tri-trans,hepta-cis-undecaprenyl diphosphate + 3 UDP + 3 H(+). It functions in the pathway protein modification; protein glycosylation. Functionally, processive glycosyltransferase that is part of the biosynthetic pathway of the lipid-linked oligosaccharide (LLO) that serves as the glycan donor in bacterial protein N-glycosylation. Catalyzes the transfer of exactly three alpha-(1-&gt;4)-N-acetylgalactosamine (GalNAc) units to the growing LLO precursor, GalNAc-alpha-(1-&gt;4)-GalNAc-alpha-(1-&gt;3)-diNAcBac-PP-undecaprenyl. Cannot accept UDP-GlcNAc as substrate. This is GalNAc-alpha-(1-&gt;4)-GalNAc-alpha-(1-&gt;3)-diNAcBac-PP-undecaprenol alpha-1,4-N-acetyl-D-galactosaminyltransferase from Campylobacter jejuni subsp. jejuni serotype O:2 (strain ATCC 700819 / NCTC 11168).